The following is an 879-amino-acid chain: Fanconi anemia core complex-associated protein 100 (879 aa).

In terms of assembly, belongs to the multisubunit FA complex composed of FANCA, FANCB, FANCC, FANCE, FANCF, FANCG, FANCL/PHF9, FANCM, FAAP24 and FAAP100. Forms a subcomplex with FANCB and FANCL.

The protein localises to the nucleus. Plays a role in Fanconi anemia-associated DNA damage response network. Regulates FANCD2 monoubiquitination and the stability of the FA core complex. Induces chromosomal instability as well as hypersensitivity to DNA cross-linking agents, when repressed. This is Fanconi anemia core complex-associated protein 100 from Mus musculus (Mouse).